A 121-amino-acid chain; its full sequence is Large ribosomal subunit protein bL12 (121 aa).

It belongs to the bacterial ribosomal protein bL12 family. Homodimer. Part of the ribosomal stalk of the 50S ribosomal subunit. Forms a multimeric L10(L12)X complex, where L10 forms an elongated spine to which 2 to 4 L12 dimers bind in a sequential fashion. Binds GTP-bound translation factors.

Functionally, forms part of the ribosomal stalk which helps the ribosome interact with GTP-bound translation factors. Is thus essential for accurate translation. The chain is Large ribosomal subunit protein bL12 from Escherichia coli O45:K1 (strain S88 / ExPEC).